Consider the following 158-residue polypeptide: 2-C-methyl-D-erythritol 2,4-cyclodiphosphate synthase (158 aa).

A divalent metal cation is bound by residues aspartate 9 and histidine 11. Residues 9–11 (DVH) and 35–36 (HS) contribute to the 4-CDP-2-C-methyl-D-erythritol 2-phosphate site. A divalent metal cation is bound at residue histidine 43. 4-CDP-2-C-methyl-D-erythritol 2-phosphate is bound by residues 57-59 (DIG), 62-66 (FPDTD), 133-136 (TTTE), phenylalanine 140, and arginine 143.

This sequence belongs to the IspF family. Homotrimer. Requires a divalent metal cation as cofactor.

The catalysed reaction is 4-CDP-2-C-methyl-D-erythritol 2-phosphate = 2-C-methyl-D-erythritol 2,4-cyclic diphosphate + CMP. It participates in isoprenoid biosynthesis; isopentenyl diphosphate biosynthesis via DXP pathway; isopentenyl diphosphate from 1-deoxy-D-xylulose 5-phosphate: step 4/6. Functionally, involved in the biosynthesis of isopentenyl diphosphate (IPP) and dimethylallyl diphosphate (DMAPP), two major building blocks of isoprenoid compounds. Catalyzes the conversion of 4-diphosphocytidyl-2-C-methyl-D-erythritol 2-phosphate (CDP-ME2P) to 2-C-methyl-D-erythritol 2,4-cyclodiphosphate (ME-CPP) with a corresponding release of cytidine 5-monophosphate (CMP). The chain is 2-C-methyl-D-erythritol 2,4-cyclodiphosphate synthase from Haemophilus influenzae (strain PittGG).